We begin with the raw amino-acid sequence, 625 residues long: Low affinity potassium transport system protein Kup (625 aa).

Transmembrane regions (helical) follow at residues 15 to 35, 58 to 78, 103 to 123, 140 to 160, 171 to 191, 218 to 238, 251 to 271, 282 to 302, 340 to 360, 366 to 386, 396 to 416, and 422 to 442; these read TIFS…IYII, IIFW…IVSI, FVIV…IIII, LSFE…LFFI, IFSF…LKGI, FFVF…YINI, LFFV…IILL, FLVP…ISII, IYIP…ISIF, LILI…FFSL, FKIL…FIFI, and IICG…IMIT.

Belongs to the HAK/KUP transporter (TC 2.A.72) family.

The protein localises to the cell membrane. It carries out the reaction K(+)(in) + H(+)(in) = K(+)(out) + H(+)(out). Responsible for the low-affinity transport of potassium into the cell. Likely operates as a K(+):H(+) symporter. This is Low affinity potassium transport system protein Kup from Wigglesworthia glossinidia brevipalpis.